The following is a 101-amino-acid chain: Large ribosomal subunit protein uL23 (101 aa).

The protein belongs to the universal ribosomal protein uL23 family. Part of the 50S ribosomal subunit. Contacts protein L29, and trigger factor when it is bound to the ribosome.

In terms of biological role, one of the early assembly proteins it binds 23S rRNA. One of the proteins that surrounds the polypeptide exit tunnel on the outside of the ribosome. Forms the main docking site for trigger factor binding to the ribosome. The sequence is that of Large ribosomal subunit protein uL23 from Wigglesworthia glossinidia brevipalpis.